The primary structure comprises 743 residues: 1,4-alpha-glucan branching enzyme GlgB (743 aa).

The active-site Nucleophile is Asp-423. The active-site Proton donor is the Glu-476.

Belongs to the glycosyl hydrolase 13 family. GlgB subfamily. Monomer.

It carries out the reaction Transfers a segment of a (1-&gt;4)-alpha-D-glucan chain to a primary hydroxy group in a similar glucan chain.. It participates in glycan biosynthesis; glycogen biosynthesis. Catalyzes the formation of the alpha-1,6-glucosidic linkages in glycogen by scission of a 1,4-alpha-linked oligosaccharide from growing alpha-1,4-glucan chains and the subsequent attachment of the oligosaccharide to the alpha-1,6 position. The sequence is that of 1,4-alpha-glucan branching enzyme GlgB from Pseudomonas fluorescens (strain ATCC BAA-477 / NRRL B-23932 / Pf-5).